A 178-amino-acid chain; its full sequence is Large ribosomal subunit protein uL6 (178 aa).

Belongs to the universal ribosomal protein uL6 family. As to quaternary structure, part of the 50S ribosomal subunit.

This protein binds to the 23S rRNA, and is important in its secondary structure. It is located near the subunit interface in the base of the L7/L12 stalk, and near the tRNA binding site of the peptidyltransferase center. The protein is Large ribosomal subunit protein uL6 of Campylobacter fetus subsp. fetus (strain 82-40).